The following is a 182-amino-acid chain: Large ribosomal subunit protein uL6 (182 aa).

Belongs to the universal ribosomal protein uL6 family. As to quaternary structure, part of the 50S ribosomal subunit.

In terms of biological role, this protein binds to the 23S rRNA, and is important in its secondary structure. It is located near the subunit interface in the base of the L7/L12 stalk, and near the tRNA binding site of the peptidyltransferase center. The sequence is that of Large ribosomal subunit protein uL6 from Desulforamulus reducens (strain ATCC BAA-1160 / DSM 100696 / MI-1) (Desulfotomaculum reducens).